Here is a 343-residue protein sequence, read N- to C-terminus: 2,3,4,5-tetrahydropyridine-2,6-dicarboxylate N-succinyltransferase (343 aa).

Glu204 serves as a coordination point for Mg(2+). Glu220 acts as the Acyl-anhydride intermediate in catalysis. Succinyl-CoA is bound by residues Arg222, Gly237, Ser240, Ala263, Glu278–Ser279, Gly286, Lys303, and Arg316–Ser319.

This sequence belongs to the type 2 tetrahydrodipicolinate N-succinyltransferase family. In terms of assembly, homotrimer.

The protein resides in the cytoplasm. The enzyme catalyses (S)-2,3,4,5-tetrahydrodipicolinate + succinyl-CoA + H2O = (S)-2-succinylamino-6-oxoheptanedioate + CoA. It functions in the pathway amino-acid biosynthesis; L-lysine biosynthesis via DAP pathway; LL-2,6-diaminopimelate from (S)-tetrahydrodipicolinate (succinylase route): step 1/3. Catalyzes the conversion of the cyclic tetrahydrodipicolinate (THDP) into the acyclic N-succinyl-L-2-amino-6-oxopimelate using succinyl-CoA. The protein is 2,3,4,5-tetrahydropyridine-2,6-dicarboxylate N-succinyltransferase of Vibrio cholerae serotype O1 (strain ATCC 39315 / El Tor Inaba N16961).